We begin with the raw amino-acid sequence, 419 residues long: ATP-dependent RNA helicase RhlB (419 aa).

The short motif at glutamine 9–alanine 37 is the Q motif element. In terms of domain architecture, Helicase ATP-binding spans leucine 40–valine 217. Residue alanine 53–threonine 60 coordinates ATP. The DEAD box signature appears at aspartate 163–aspartate 166. In terms of domain architecture, Helicase C-terminal spans lysine 241–isoleucine 388.

Belongs to the DEAD box helicase family. RhlB subfamily. As to quaternary structure, component of the RNA degradosome, which is a multiprotein complex involved in RNA processing and mRNA degradation.

The protein resides in the cytoplasm. The catalysed reaction is ATP + H2O = ADP + phosphate + H(+). In terms of biological role, DEAD-box RNA helicase involved in RNA degradation. Has RNA-dependent ATPase activity and unwinds double-stranded RNA. The chain is ATP-dependent RNA helicase RhlB from Histophilus somni (strain 2336) (Haemophilus somnus).